The sequence spans 447 residues: Trigger factor (447 aa).

In terms of domain architecture, PPIase FKBP-type spans 164-249 (GNQVTFDFEG…VKLVEKSKLP (86 aa)).

The protein belongs to the FKBP-type PPIase family. Tig subfamily.

It is found in the cytoplasm. It carries out the reaction [protein]-peptidylproline (omega=180) = [protein]-peptidylproline (omega=0). In terms of biological role, involved in protein export. Acts as a chaperone by maintaining the newly synthesized protein in an open conformation. Functions as a peptidyl-prolyl cis-trans isomerase. This is Trigger factor from Psychrobacter cryohalolentis (strain ATCC BAA-1226 / DSM 17306 / VKM B-2378 / K5).